A 399-amino-acid chain; its full sequence is Elongation factor Tu (399 aa).

The tr-type G domain occupies 10 to 208; the sequence is KPHVNIGTIG…TVDSYIPEPE (199 aa). The tract at residues 19–26 is G1; sequence GHVDHGKT. Position 19-26 (19-26) interacts with GTP; sequence GHVDHGKT. Thr-26 contributes to the Mg(2+) binding site. Residues 64-68 form a G2 region; that stretch reads GITIN. Positions 85–88 are G3; that stretch reads DAPG. GTP is bound by residues 85–89 and 140–143; these read DAPGH and NKVD. Residues 140 to 143 are G4; sequence NKVD. Positions 178-180 are G5; sequence SAL.

Belongs to the TRAFAC class translation factor GTPase superfamily. Classic translation factor GTPase family. EF-Tu/EF-1A subfamily. As to quaternary structure, monomer.

Its subcellular location is the cytoplasm. It carries out the reaction GTP + H2O = GDP + phosphate + H(+). GTP hydrolase that promotes the GTP-dependent binding of aminoacyl-tRNA to the A-site of ribosomes during protein biosynthesis. The protein is Elongation factor Tu of Streptococcus pyogenes serotype M12 (strain MGAS2096).